The sequence spans 477 residues: uncharacterized protein (477 aa).

A helical transmembrane segment spans residues 107–129; the sequence is VNFWSLSMACASVLALLGLVYLI.

It localises to the membrane. This is an uncharacterized protein from Treponema pallidum (strain Nichols).